The following is an 87-amino-acid chain: Beta-toxin Ct17 (87 aa).

An N-terminal signal peptide occupies residues 1–19; that stretch reads MNSLLMITACLVLIGTVWA. Residues 20 to 85 form the LCN-type CS-alpha/beta domain; the sequence is KKDGYLVDKT…TWPLPNKRCG (66 aa). 4 disulfides stabilise this stretch: Cys-31-Cys-84, Cys-35-Cys-60, Cys-44-Cys-65, and Cys-48-Cys-67. A Cysteine amide modification is found at Cys-84.

It belongs to the long (4 C-C) scorpion toxin superfamily. Sodium channel inhibitor family. Beta subfamily. In terms of tissue distribution, expressed by the venom gland.

It localises to the secreted. Beta toxins bind voltage-independently at site-4 of sodium channels (Nav) and shift the voltage of activation toward more negative potentials thereby affecting sodium channel activation and promoting spontaneous and repetitive firing. Is possibly lethal to mice, freshwater shrimp and crickets. This is Beta-toxin Ct17 from Centruroides tecomanus (Scorpion).